Reading from the N-terminus, the 1084-residue chain is Carbamoyl phosphate synthase large chain (1084 aa).

Positions 1–401 are carboxyphosphate synthetic domain; the sequence is MPRRQDVEKV…ALLKAVRSLE (401 aa). Positions 129, 169, 175, 176, 208, 210, 215, 241, 242, 243, 284, and 298 each coordinate ATP. In terms of domain architecture, ATP-grasp 1 spans 133–327; that stretch reads RALMKEIGEP…IAKVAAKIAV (195 aa). 3 residues coordinate Mg(2+): Q284, E298, and N300. Residues Q284, E298, and N300 each coordinate Mn(2+). Positions 402-546 are oligomerization domain; sequence TGRDGLFHPA…YSCYDEENEA (145 aa). The tract at residues 547–947 is carbamoyl phosphate synthetic domain; it reads VSPPGRKAVV…ALYKALLASG (401 aa). The region spanning 672-862 is the ATP-grasp 2 domain; it reads DQLLSDLSIP…LAKVATQVIA (191 aa). 9 residues coordinate ATP: R708, R747, E753, G778, V779, H780, S781, Q821, and E833. 3 residues coordinate Mg(2+): Q821, E833, and N835. Mn(2+) contacts are provided by Q821, E833, and N835. An MGS-like domain is found at 948–1084; that stretch reads VRVPHRGTVL…VGISAVQDWV (137 aa). The interval 948–1084 is allosteric domain; the sequence is VRVPHRGTVL…VGISAVQDWV (137 aa).

The protein belongs to the CarB family. Composed of two chains; the small (or glutamine) chain promotes the hydrolysis of glutamine to ammonia, which is used by the large (or ammonia) chain to synthesize carbamoyl phosphate. Tetramer of heterodimers (alpha,beta)4. Requires Mg(2+) as cofactor. The cofactor is Mn(2+).

The enzyme catalyses hydrogencarbonate + L-glutamine + 2 ATP + H2O = carbamoyl phosphate + L-glutamate + 2 ADP + phosphate + 2 H(+). The catalysed reaction is hydrogencarbonate + NH4(+) + 2 ATP = carbamoyl phosphate + 2 ADP + phosphate + 2 H(+). The protein operates within amino-acid biosynthesis; L-arginine biosynthesis; carbamoyl phosphate from bicarbonate: step 1/1. It functions in the pathway pyrimidine metabolism; UMP biosynthesis via de novo pathway; (S)-dihydroorotate from bicarbonate: step 1/3. Its function is as follows. Large subunit of the glutamine-dependent carbamoyl phosphate synthetase (CPSase). CPSase catalyzes the formation of carbamoyl phosphate from the ammonia moiety of glutamine, carbonate, and phosphate donated by ATP, constituting the first step of 2 biosynthetic pathways, one leading to arginine and/or urea and the other to pyrimidine nucleotides. The large subunit (synthetase) binds the substrates ammonia (free or transferred from glutamine from the small subunit), hydrogencarbonate and ATP and carries out an ATP-coupled ligase reaction, activating hydrogencarbonate by forming carboxy phosphate which reacts with ammonia to form carbamoyl phosphate. This chain is Carbamoyl phosphate synthase large chain, found in Symbiobacterium thermophilum (strain DSM 24528 / JCM 14929 / IAM 14863 / T).